The primary structure comprises 525 residues: 2,3-bisphosphoglycerate-independent phosphoglycerate mutase (525 aa).

Mn(2+)-binding residues include Asp15 and Ser65. Catalysis depends on Ser65, which acts as the Phosphoserine intermediate. Substrate contacts are provided by residues His126, 156–157 (RD), Arg188, Arg194, 258–261 (RPDR), and Lys331. Residues Asp398, His402, Asp439, His440, and His457 each coordinate Mn(2+).

The protein belongs to the BPG-independent phosphoglycerate mutase family. As to quaternary structure, monomer. Mn(2+) serves as cofactor.

It catalyses the reaction (2R)-2-phosphoglycerate = (2R)-3-phosphoglycerate. Its pathway is carbohydrate degradation; glycolysis; pyruvate from D-glyceraldehyde 3-phosphate: step 3/5. Functionally, catalyzes the interconversion of 2-phosphoglycerate and 3-phosphoglycerate. In Picosynechococcus sp. (strain ATCC 27264 / PCC 7002 / PR-6) (Agmenellum quadruplicatum), this protein is 2,3-bisphosphoglycerate-independent phosphoglycerate mutase.